The following is a 728-amino-acid chain: Pre-mRNA-splicing ATP-dependent RNA helicase prp-28 (728 aa).

The segment at 19–155 is disordered; that stretch reads KKEEEAAAAK…NDEAELRARY (137 aa). Composition is skewed to basic and acidic residues over residues 33 to 59, 109 to 125, and 137 to 153; these read PKKE…EEAK, RDYR…DRNQ, and EEKR…ELRA. A Q motif motif is present at residues 293–321; the sequence is RSWEESTLPRRLLDIVKNVGYDEPTPIQR. Residues 324 to 527 form the Helicase ATP-binding domain; sequence IPIALQARDL…KKYLRRPAIV (204 aa). 337 to 344 is an ATP binding site; sequence AVTGSGKT. Residues 450–453 carry the DEAD box motif; it reads DEAD. A Helicase C-terminal domain is found at 538 to 701; that stretch reads TVEQRVEFVS…KVPDELRRHE (164 aa). A disordered region spans residues 692-728; sequence KVPDELRRHEAAQNKPQKGQKKLEESNGYSGKGGSWN. The span at 693-703 shows a compositional bias: basic and acidic residues; it reads VPDELRRHEAA.

Belongs to the DEAD box helicase family. DDX23/PRP28 subfamily. Component of the U5 snRNP complex.

It is found in the cytoplasm. It localises to the nucleus. The catalysed reaction is ATP + H2O = ADP + phosphate + H(+). Its function is as follows. ATP-dependent RNA helicase involved in mRNA splicing. May destabilize the U1/5'-splice site duplex to permit an effective competition for the 5'-splice site by the U6 snRNA, resulting in the switch between U1 and U6 at the 5'-splice site. May also act to unwind the U4/U6 base-pairing interaction in the U4/U6/U5 snRNP, facilitating the first covalent step of splicing. This Neurospora crassa (strain ATCC 24698 / 74-OR23-1A / CBS 708.71 / DSM 1257 / FGSC 987) protein is Pre-mRNA-splicing ATP-dependent RNA helicase prp-28 (prp-28).